The chain runs to 439 residues: Xylose isomerase (439 aa).

Catalysis depends on residues histidine 101 and aspartate 104. Mg(2+) is bound by residues glutamate 232, glutamate 268, histidine 271, aspartate 296, aspartate 307, aspartate 309, and aspartate 339.

The protein belongs to the xylose isomerase family. As to quaternary structure, homotetramer. Mg(2+) serves as cofactor.

Its subcellular location is the cytoplasm. The enzyme catalyses alpha-D-xylose = alpha-D-xylulofuranose. This is Xylose isomerase from Serratia proteamaculans (strain 568).